Reading from the N-terminus, the 386-residue chain is Succinate--CoA ligase [ADP-forming] subunit beta (386 aa).

The ATP-grasp domain maps to Lys-9–Glu-244. ATP is bound by residues Lys-46, Gly-53–Gly-55, Glu-99, Ser-102, and Glu-107. Mg(2+) is bound by residues Asn-199 and Asp-213. Residues Asn-264 and Gly-321 to Met-323 each bind substrate.

This sequence belongs to the succinate/malate CoA ligase beta subunit family. Heterotetramer of two alpha and two beta subunits. Mg(2+) is required as a cofactor.

The catalysed reaction is succinate + ATP + CoA = succinyl-CoA + ADP + phosphate. It carries out the reaction GTP + succinate + CoA = succinyl-CoA + GDP + phosphate. It participates in carbohydrate metabolism; tricarboxylic acid cycle; succinate from succinyl-CoA (ligase route): step 1/1. Its function is as follows. Succinyl-CoA synthetase functions in the citric acid cycle (TCA), coupling the hydrolysis of succinyl-CoA to the synthesis of either ATP or GTP and thus represents the only step of substrate-level phosphorylation in the TCA. The beta subunit provides nucleotide specificity of the enzyme and binds the substrate succinate, while the binding sites for coenzyme A and phosphate are found in the alpha subunit. This is Succinate--CoA ligase [ADP-forming] subunit beta from Wolbachia sp. subsp. Brugia malayi (strain TRS).